Consider the following 167-residue polypeptide: L-alanine exporter AlaE (167 aa).

Transmembrane regions (helical) follow at residues 25–45 (GTEF…TGII), 50–70 (IAGM…ALMI), 105–125 (FQVP…GGLV), and 129–149 (LGAA…LNWV).

Belongs to the AlaE exporter family.

The protein resides in the cell inner membrane. In terms of biological role, exports L-alanine. The sequence is that of L-alanine exporter AlaE from Pantoea sp. (strain At-9b).